The following is a 417-amino-acid chain: Aminoacyltransferase FemB (417 aa).

Belongs to the FemABX family.

The protein resides in the cytoplasm. It carries out the reaction MurNAc-L-Ala-D-isoglutaminyl-L-Lys-(N(6)-tri-Gly)-D-Ala-D-Ala-diphospho-di-trans,octa-cis-undecaprenyl-GlcNAc + 2 glycyl-tRNA(Gly) = MurNAc-L-Ala-D-isoglutaminyl-L-Lys-(N(6)-penta-Gly)-D-Ala-D-Ala-diphospho-di-trans,octa-cis-undecaprenyl-GlcNAc + 2 tRNA(Gly) + 2 H(+). Its function is as follows. Catalyzes the incorporation of amino acid(s) into the interchain peptide bridge of peptidoglycan, using aminoacyl-tRNA as amino acid donor. In Staphylococcus epidermidis (strain ATCC 12228 / FDA PCI 1200), this protein is Aminoacyltransferase FemB (femB).